The following is a 431-amino-acid chain: MGVRAVVLSARSVAKINRVVARQILDSRGRPTVEVEVLLSDGAVGRVSVPSGASVGKFEAVELRDGDQAKYAGHGVLKPVQRVNTTVADSLAGVSPFDQRAVDEILLSLDGTKNKSKLGANATIGVSLAVAKAAADSVGIPLYKYLGGAVAREMPLPLVNVINGGLHADNLLDFQEFMIVPVGAKTFADAAQICAEVFYKLKEVLKKMGHSTNTGDEGGFAPNLENNTDVLDVLVEAIEKSGYRASSDVALAMDVAASTFYDGTSYKFSGKCLTSGELIACYEDMVSRYPIISIEDAMAESDIEGWKAVTKRLGDKIQLVGDDLFVTNPALIANGVENKLANAVLVKPNQIGTLTETIDAIRSAQRNNYNVIISHRSGETEDVTIAHIAVAANCGQIKSGSFSRSERLAKYNELLRIEEDLGKSALLYNVI.

Glutamine 175 contributes to the (2R)-2-phosphoglycerate binding site. Glutamate 217 functions as the Proton donor in the catalytic mechanism. Mg(2+) is bound by residues aspartate 254, glutamate 295, and aspartate 322. Residues lysine 347, arginine 376, serine 377, and lysine 398 each coordinate (2R)-2-phosphoglycerate. Catalysis depends on lysine 347, which acts as the Proton acceptor.

Belongs to the enolase family. Mg(2+) serves as cofactor.

It is found in the cytoplasm. The protein localises to the secreted. It localises to the cell surface. The catalysed reaction is (2R)-2-phosphoglycerate = phosphoenolpyruvate + H2O. Its pathway is carbohydrate degradation; glycolysis; pyruvate from D-glyceraldehyde 3-phosphate: step 4/5. Functionally, catalyzes the reversible conversion of 2-phosphoglycerate (2-PG) into phosphoenolpyruvate (PEP). It is essential for the degradation of carbohydrates via glycolysis. In Anaplasma marginale (strain St. Maries), this protein is Enolase.